The following is a 132-amino-acid chain: Pollen allergen Phl p 6 (132 aa).

Residues 1 to 22 form the signal peptide; it reads MVAMFLAVAVVLGLATSPTAEG.

The protein belongs to the Poa p IX/Phl p VI allergen family.

This chain is Pollen allergen Phl p 6 (PHLPVI), found in Phleum pratense (Common timothy).